Reading from the N-terminus, the 299-residue chain is MPPKVAPESSDAVSSQEQPQRPPPATPPVPTPPPGRREEVGDRAEDPILQRLESLTALLRSERSAVRVTNASFETGRPALQPTADMRGDVTNMYNRPSTDSLWAVKPKPISNNMATSEDMVKIKVALEGLGVPTEHITGIIYQMCFYCASTSSSSYQDPKGVFEWPGGAIMVDDVMGKVQEIAGIRRVCRLYAPVTWNYMHIHDSPPSDWASMGFAPNVKYAAFDCFDYVENPAAVQPLGGVIPRPTRDEYVAYNAYKLIVLNKANNNDTYGNFSAQITGGRMGPTIEHNFNNANNKKQ.

Residues 1–46 (MPPKVAPESSDAVSSQEQPQRPPPATPPVPTPPPGRREEVGDRAED) form a disordered region. The span at 20–34 (QRPPPATPPVPTPPP) shows a compositional bias: pro residues. The segment covering 35 to 46 (GRREEVGDRAED) has biased composition (basic and acidic residues).

Belongs to the potexviruses coat protein family.

The protein localises to the virion. Its function is as follows. Required for genome encapsidation. Forms ribonucleoprotein complexes along with TGB1 helicase and viral RNA. The protein is Capsid protein of Helenium virus S (HelVS).